Consider the following 689-residue polypeptide: Glycine--tRNA ligase beta subunit (689 aa).

Belongs to the class-II aminoacyl-tRNA synthetase family. In terms of assembly, tetramer of two alpha and two beta subunits.

The protein localises to the cytoplasm. It carries out the reaction tRNA(Gly) + glycine + ATP = glycyl-tRNA(Gly) + AMP + diphosphate. This is Glycine--tRNA ligase beta subunit from Salmonella arizonae (strain ATCC BAA-731 / CDC346-86 / RSK2980).